Here is a 21-residue protein sequence, read N- to C-terminus: Trypsin (21 aa).

Belongs to the peptidase S1 family.

It is found in the secreted. The protein localises to the extracellular space. The catalysed reaction is Preferential cleavage: Arg-|-Xaa, Lys-|-Xaa.. The chain is Trypsin from Apis mellifera scutellata (Africanized honey bee).